The following is a 962-amino-acid chain: Protease 3 (962 aa).

A signal peptide spans 1–23 (MPRSTWFKALLLLVALWAPLSQA). Histidine 88 lines the Zn(2+) pocket. Glutamate 91 serves as the catalytic Proton acceptor. 2 residues coordinate Zn(2+): histidine 92 and glutamate 169.

The protein belongs to the peptidase M16 family. In terms of assembly, monomer. Requires Zn(2+) as cofactor.

The protein resides in the periplasm. It catalyses the reaction Preferential cleavage of 16-Tyr-|-Leu-17 and 25-Phe-|-Tyr-26 bonds of oxidized insulin B chain. Also acts on other substrates of Mw less than 7 kDa such as insulin and glucagon.. Endopeptidase that degrades small peptides of less than 7 kDa, such as glucagon and insulin. In Escherichia coli (strain K12), this protein is Protease 3 (ptrA).